The chain runs to 658 residues: Probable rhamnogalacturonate lyase B (658 aa).

Residues 1–19 form the signal peptide; sequence MRFAIPLGAACAWAGVALA. Residues N110, N143, N239, N280, N522, N530, N592, and N633 are each glycosylated (N-linked (GlcNAc...) asparagine).

This sequence belongs to the polysaccharide lyase 4 family.

The protein localises to the secreted. It carries out the reaction Endotype eliminative cleavage of L-alpha-rhamnopyranosyl-(1-&gt;4)-alpha-D-galactopyranosyluronic acid bonds of rhamnogalacturonan I domains in ramified hairy regions of pectin leaving L-rhamnopyranose at the reducing end and 4-deoxy-4,5-unsaturated D-galactopyranosyluronic acid at the non-reducing end.. Pectinolytic enzymes consist of four classes of enzymes: pectin lyase, polygalacturonase, pectin methylesterase and rhamnogalacturonase. Degrades the rhamnogalacturonan I (RG-I) backbone of pectin. This is Probable rhamnogalacturonate lyase B (rglB) from Aspergillus fumigatus (strain CBS 144.89 / FGSC A1163 / CEA10) (Neosartorya fumigata).